The chain runs to 309 residues: THAP domain-containing protein 7 (309 aa).

A THAP-type zinc finger spans residues 1-93 (MPRHCSAAGC…LKEGAVPTIF (93 aa)). Phosphoserine is present on serine 162. Residues 176-210 (SDLLGPLGAQADEAGCSTQPSPEQHPSPLEPQPAS) form a disordered region. Residues 198-209 (EQHPSPLEPQPA) are compositionally biased toward pro residues. A Phosphoserine modification is found at serine 210. The HCFC1-binding motif (HBM) signature appears at 229–232 (EHSY).

Forms homodimers. Interacts with HDAC3 and nuclear hormone receptor corepressors. Interacts via HBM with HCFC1.

Its subcellular location is the nucleus. The protein localises to the chromosome. Functionally, chromatin-associated, histone tail-binding protein that represses transcription via recruitment of HDAC3 and nuclear hormone receptor corepressors. The protein is THAP domain-containing protein 7 (Thap7) of Mus musculus (Mouse).